A 360-amino-acid chain; its full sequence is Phospho-N-acetylmuramoyl-pentapeptide-transferase (360 aa).

Helical transmembrane passes span 24 to 44 (RAVMAALTALAFSLMFGPWTI), 69 to 89 (GTPTMGGSLILTAITVSTLLW), 92 to 112 (WANPYIWILLGVLLATGALGF), 133 to 153 (MVWQSSVAIIAGLALFYLAAN), 158 to 178 (ILIVPFFKQIALPLGVVGFLV), 199 to 219 (GLATFPVVLVAAGLAIFAYAS), 239 to 259 (VVIFCTAMCGACLGFLWFNAY), 263 to 283 (VFMGDVGALALGAALGTVAVI), 288 to 308 (FVLVIMGGLFVVEAVSVMLQV), and 337 to 357 (QVVVRFWIITIVLVLIGLSTL).

The protein belongs to the glycosyltransferase 4 family. MraY subfamily. Mg(2+) is required as a cofactor.

The protein resides in the cell inner membrane. The catalysed reaction is UDP-N-acetyl-alpha-D-muramoyl-L-alanyl-gamma-D-glutamyl-meso-2,6-diaminopimeloyl-D-alanyl-D-alanine + di-trans,octa-cis-undecaprenyl phosphate = di-trans,octa-cis-undecaprenyl diphospho-N-acetyl-alpha-D-muramoyl-L-alanyl-D-glutamyl-meso-2,6-diaminopimeloyl-D-alanyl-D-alanine + UMP. The protein operates within cell wall biogenesis; peptidoglycan biosynthesis. Its function is as follows. Catalyzes the initial step of the lipid cycle reactions in the biosynthesis of the cell wall peptidoglycan: transfers peptidoglycan precursor phospho-MurNAc-pentapeptide from UDP-MurNAc-pentapeptide onto the lipid carrier undecaprenyl phosphate, yielding undecaprenyl-pyrophosphoryl-MurNAc-pentapeptide, known as lipid I. This Neisseria meningitidis serogroup A / serotype 4A (strain DSM 15465 / Z2491) protein is Phospho-N-acetylmuramoyl-pentapeptide-transferase.